We begin with the raw amino-acid sequence, 294 residues long: Fatty acyl-CoA reductase Rv0547c (294 aa).

Positions 49, 50, 52, 72, 97, 98, 124, 192, 196, 225, and 227 each coordinate NADP(+). Residue tyrosine 192 is the Proton acceptor of the active site.

Belongs to the short-chain dehydrogenases/reductases (SDR) family.

It is found in the host mitochondrion. It catalyses the reaction hexadecanal + NADP(+) + CoA = hexadecanoyl-CoA + NADPH + H(+). Its function is as follows. Oxidoreductase that promotes the persistence of M.tuberculosis in host macrophages by reprogramming the fatty acid metabolism in host mitochondria. When localized in the host mitochondria, it potentially acts on unknown lipid substrates and converts them into products that directly or indirectly alter the lipid profile of the mitochondria. This change in lipid profile results in increased mitochondrial membrane fluidity, enhanced endogenous fatty acid oxidation and increased mitochondrial spare respiratory capacity. All these events eventually favor M.tuberculosis persistence in the host macrophages. In vitro, can catalyze the NADPH-dependent reduction of palmitoyl-CoA (hexadecanoyl-CoA). The protein is Fatty acyl-CoA reductase Rv0547c of Mycobacterium tuberculosis (strain ATCC 25618 / H37Rv).